The sequence spans 402 residues: Protein indeterminate-domain 12 (402 aa).

The segment at 47 to 66 (TETHKPKKKRGLPGNPDPDA) is disordered. Ser-72 carries the phosphoserine modification. 2 consecutive C2H2-type zinc fingers follow at residues 82 to 104 (FVCEICNKGFQRDQNLQLHRRGH) and 124 to 154 (YVCPETNCAHHHPSRALGDLTGIKKHFCRKH). Residues 146 to 153 (IKKHFCRK) carry the Nuclear localization signal motif. Residues 159–183 (WKCEKCSKFYAVQSDWKAHTKICGT) form a C2H2-type 2; degenerate zinc finger. The Zn(2+) site is built by Cys-161, Cys-164, His-177, Cys-181, Cys-188, Cys-190, His-203, and Cys-207. Residues 186 to 209 (YRCDCGTLFSRKDTFITHRAFCDA) form a CCHC-type 2; atypical zinc finger. The tract at residues 196 to 208 (RKDTFITHRAFCD) is SHR-binding.

The protein resides in the nucleus. Functionally, probable transcription factor. This chain is Protein indeterminate-domain 12, found in Arabidopsis thaliana (Mouse-ear cress).